The following is an 874-amino-acid chain: Alanine--tRNA ligase (874 aa).

Residues histidine 564, histidine 568, cysteine 665, and histidine 669 each contribute to the Zn(2+) site.

The protein belongs to the class-II aminoacyl-tRNA synthetase family. The cofactor is Zn(2+).

It localises to the cytoplasm. The enzyme catalyses tRNA(Ala) + L-alanine + ATP = L-alanyl-tRNA(Ala) + AMP + diphosphate. Its function is as follows. Catalyzes the attachment of alanine to tRNA(Ala) in a two-step reaction: alanine is first activated by ATP to form Ala-AMP and then transferred to the acceptor end of tRNA(Ala). Also edits incorrectly charged Ser-tRNA(Ala) and Gly-tRNA(Ala) via its editing domain. This Cupriavidus metallidurans (strain ATCC 43123 / DSM 2839 / NBRC 102507 / CH34) (Ralstonia metallidurans) protein is Alanine--tRNA ligase.